The primary structure comprises 440 residues: Protein disulfide-isomerase A6 (440 aa).

Positions 1–19 are cleaved as a signal peptide; sequence MALLVLGLVSCTFFLAVNG. Thioredoxin domains are found at residues 20 to 133 and 154 to 287; these read LYSS…ALRQ and SDSS…EDIA. Active-site nucleophile residues include C55 and C58. Cysteines 55 and 58 form a disulfide. S129 bears the Phosphoserine mark. Positions 141–161 are disordered; the sequence is GRSGGYSSGKQGRSDSSSKKD. Residues 152–161 are compositionally biased toward basic and acidic residues; the sequence is GRSDSSSKKD. S156 is subject to Phosphoserine; by FAM20C. Phosphoserine is present on S158. Active-site nucleophile residues include C190 and C193. C190 and C193 are oxidised to a cystine. S428 is subject to Phosphoserine. The Prevents secretion from ER motif lies at 437 to 440; the sequence is KDEL.

The protein belongs to the protein disulfide isomerase family. As to quaternary structure, part of a large chaperone multiprotein complex comprising DNAJB11, HSP90B1, HSPA5, HYOU, PDIA2, PDIA4, PDIA6, PPIB, SDF2L1, UGGT1 and very small amounts of ERP29, but not, or at very low levels, CALR nor CANX. Interacts with MICA on the surface of tumor cells, leading to MICA disulfide bond reduction which is required for its release from tumor cells. Interacts with ITGB3 following platelet stimulation. Interacts with ERN1; the interaction is direct. Interacts with EIF2AK3. Expressed in platelets (at protein level).

It is found in the endoplasmic reticulum lumen. The protein localises to the cell membrane. The protein resides in the melanosome. It carries out the reaction Catalyzes the rearrangement of -S-S- bonds in proteins.. Its function is as follows. May function as a chaperone that inhibits aggregation of misfolded proteins. Negatively regulates the unfolded protein response (UPR) through binding to UPR sensors such as ERN1, which in turn inactivates ERN1 signaling. May also regulate the UPR via the EIF2AK3 UPR sensor. Plays a role in platelet aggregation and activation by agonists such as convulxin, collagen and thrombin. This chain is Protein disulfide-isomerase A6 (PDIA6), found in Homo sapiens (Human).